The sequence spans 131 residues: Putative gamma-taxilin 2 (131 aa).

Belongs to the taxilin family. Ubiquitously expressed.

The protein is Putative gamma-taxilin 2 (TXLNGY) of Homo sapiens (Human).